The sequence spans 173 residues: Translation initiation factor IF-3 (173 aa).

This sequence belongs to the IF-3 family. In terms of assembly, monomer.

It is found in the cytoplasm. Functionally, IF-3 binds to the 30S ribosomal subunit and shifts the equilibrium between 70S ribosomes and their 50S and 30S subunits in favor of the free subunits, thus enhancing the availability of 30S subunits on which protein synthesis initiation begins. The protein is Translation initiation factor IF-3 of Lactiplantibacillus plantarum (strain ATCC BAA-793 / NCIMB 8826 / WCFS1) (Lactobacillus plantarum).